Consider the following 277-residue polypeptide: tRNA pseudouridine synthase A (277 aa).

Catalysis depends on D57, which acts as the Nucleophile. Position 115 (Y115) interacts with substrate.

The protein belongs to the tRNA pseudouridine synthase TruA family. In terms of assembly, homodimer.

The enzyme catalyses uridine(38/39/40) in tRNA = pseudouridine(38/39/40) in tRNA. Formation of pseudouridine at positions 38, 39 and 40 in the anticodon stem and loop of transfer RNAs. The protein is tRNA pseudouridine synthase A of Nitratidesulfovibrio vulgaris (strain DSM 19637 / Miyazaki F) (Desulfovibrio vulgaris).